The sequence spans 21 residues: Cupiennin-6b (21 aa).

A Serine amide modification is found at serine 21.

In terms of tissue distribution, expressed by the venom gland.

It is found in the secreted. This chain is Cupiennin-6b, found in Cupiennius salei (American wandering spider).